The following is a 609-amino-acid chain: Kelch domain-containing protein 10 homolog (609 aa).

Residues 103–146 (ASDLDEEEEEEDDDVDVDVDYGDTDSESEFEEMYSDEWTSSSDE) are disordered. A compositionally biased stretch (acidic residues) spans 104–137 (SDLDEEEEEEDDDVDVDVDYGDTDSESEFEEMYS). Kelch repeat units follow at residues 214–277 (HLYS…IHNN), 279–334 (LISH…IHKH), 335–381 (FLYT…RYRH), 389–437 (HIFV…GNRG), 458–508 (EAFI…HSDN), and 510–554 (CMYV…YNDN). The segment at 576 to 609 (LPPQRRRRLDTSQPDPSMLISLYSNPKRARSSTQ) is disordered.

As to quaternary structure, interacts with Elongin-C; may be the substrate recognition component of an E3 ubiquitin ligase complex.

Its function is as follows. Activates the Pk92B/DASK1-MAPK signaling cascade. This Drosophila melanogaster (Fruit fly) protein is Kelch domain-containing protein 10 homolog (slim).